The sequence spans 1801 residues: Laminin subunit beta-2 (1801 aa).

Residues 1–35 (MEWASGKPGRGRQGQPVPWELRLGLLLSVLAATLA) form the signal peptide. The 240-residue stretch at 46 to 285 (SRGSCYPATG…ALYELVIRGN (240 aa)) folds into the Laminin N-terminal domain. Asn251 is a glycosylation site (N-linked (GlcNAc...) asparagine). 19 disulfide bridges follow: Cys286–Cys295, Cys288–Cys313, Cys315–Cys324, Cys327–Cys347, Cys350–Cys359, Cys352–Cys377, Cys380–Cys389, Cys392–Cys410, Cys413–Cys426, Cys415–Cys441, Cys443–Cys452, Cys455–Cys470, Cys473–Cys487, Cys475–Cys494, Cys496–Cys505, Cys508–Cys522, Cys525–Cys537, Cys527–Cys544, and Cys546–Cys555. 4 consecutive Laminin EGF-like domains span residues 286–349 (CFCY…ACRK), 350–412 (CECN…ACRP), 413–472 (CDCD…GCQR), and 473–524 (CQCN…GCRP). An N-linked (GlcNAc...) asparagine glycan is attached at Asn371. The region spanning 525 to 555 (CDCDVGGALDPQCDEATGQCPCRPHMIGRRC) is the Laminin EGF-like 5; truncated domain. The Laminin IV type B domain occupies 564–780 (RPFLDHLTWE…LLISASSLVY (217 aa)). 32 cysteine pairs are disulfide-bonded: Cys786–Cys798, Cys788–Cys805, Cys807–Cys816, Cys819–Cys831, Cys834–Cys846, Cys836–Cys853, Cys855–Cys864, Cys867–Cys877, Cys880–Cys889, Cys882–Cys896, Cys899–Cys908, Cys911–Cys927, Cys930–Cys946, Cys932–Cys957, Cys959–Cys968, Cys971–Cys986, Cys989–Cys1003, Cys991–Cys1010, Cys1013–Cys1022, Cys1025–Cys1038, Cys1041–Cys1061, Cys1043–Cys1068, Cys1070–Cys1079, Cys1082–Cys1095, Cys1098–Cys1110, Cys1100–Cys1117, Cys1119–Cys1128, Cys1131–Cys1143, Cys1146–Cys1158, Cys1148–Cys1165, Cys1167–Cys1176, and Cys1179–Cys1190. Laminin EGF-like domains are found at residues 786–833 (CQCD…GCQA), 834–879 (CQCS…NCRP), 880–929 (CVCN…QCRP), 930–988 (CPCP…RCQL), 989–1040 (CECS…SCHR), 1041–1097 (CTCN…GCQP), 1098–1145 (CACH…QCRA), and 1146–1192 (CDCD…ACHP). Asn1088 carries N-linked (GlcNAc...) asparagine glycosylation. The tract at residues 1193–1412 (CHACFGDWDR…LSLTGVNELV (220 aa)) is domain II. N-linked (GlcNAc...) asparagine glycosylation occurs at Asn1252. A coiled-coil region spans residues 1259–1306 (AKLVEATEGLRHEIGKTTERLTQLEAELTDVQDENFNANHALSGLERD). N-linked (GlcNAc...) asparagine glycans are attached at residues Asn1311 and Asn1351. The domain alpha stretch occupies residues 1413–1445 (CGAPGDAPCATSPCGGAGCRDEDGQPRCGGLGC). A domain I region spans residues 1446 to 1801 (SGAAATADLA…LQVQIYNTCQ (356 aa)). Positions 1475 to 1529 (GILSRVSETRRQAEEAQQRAQAALDKANASRGQVEQANQELRELIQNVKDFLSQE) form a coiled coil. Asn1502 is a glycosylation site (N-linked (GlcNAc...) asparagine). Ser1535 bears the Phosphoserine mark. Residues 1576-1793 (LAHTMGDVRR…RSVLQAINLQ (218 aa)) adopt a coiled-coil conformation. Residues 1684–1694 (ASTAEETAGSA) show a composition bias toward low complexity. Residues 1684-1703 (ASTAEETAGSAQSRAREAEK) are disordered.

Laminin is a complex glycoprotein, consisting of three different polypeptide chains (alpha, beta, gamma), which are bound to each other by disulfide bonds into a cross-shaped molecule comprising one long and three short arms with globules at each end. Beta-2 is a subunit of laminin-3 (laminin-121 or S-laminin), laminin-4 (laminin-221 or S-merosin), laminin-7 (laminin-321 or KS-laminin), laminin-9 (laminin-421), laminin-11 (laminin-521), laminin-14 (laminin-423) and laminin-15 (laminin-523). As to expression, found in the basement membranes (major component). S-laminin is concentrated in the synaptic cleft of the neuromuscular junction.

The protein resides in the secreted. It is found in the extracellular space. Its subcellular location is the extracellular matrix. The protein localises to the basement membrane. Functionally, binding to cells via a high affinity receptor, laminin is thought to mediate the attachment, migration and organization of cells into tissues during embryonic development by interacting with other extracellular matrix components. This chain is Laminin subunit beta-2 (Lamb2), found in Rattus norvegicus (Rat).